Here is a 501-residue protein sequence, read N- to C-terminus: Actin nucleation-promoting factor WASL (501 aa).

Ser2 is modified (N-acetylserine). Residues Leu31 to Arg138 form the WH1 domain. Disordered stretches follow at residues Leu135–Thr158 and Ser180–Thr202. Residues Lys183–Leu195 are compositionally biased toward basic residues. The CRIB domain maps to Ile200–Gly213. The residue at position 239 (Ser239) is a Phosphoserine; by TNK2. Tyr253 carries the post-translational modification Phosphotyrosine; by FAK1 and TNK2. Disordered stretches follow at residues Glu263–Leu405 and Gln442–Asp501. Composition is skewed to pro residues over residues Ala273–Leu361 and Ala368–Leu387. Arg304 bears the Omega-N-methylarginine mark. WH2 domains are found at residues Asn401–Val418 and Gly429–Val446. The span at Gln442–Thr453 shows a compositional bias: polar residues. A phosphoserine mark is found at Ser480 and Ser481. Acidic residues predominate over residues Asp482–Asp501.

Binds actin and the Arp2/3 complex. Interacts with CDC42. Interacts with FCHSD1. Interacts with FCHSD2. Binds to SH3 domains of GRB2. Interacts with the C-terminal SH3 domain of DNMBP. Interacts with SNX9. Interacts with the WW domains of PRPF40A/FBP11. Interacts with PTK2/FAK1. Interacts with PACSIN1, PACSIN2 and PACSIN3. Interacts with NOSTRIN. Binds to TNK2. Interacts with SNX33. Interacts with NONO (via second RRM domain); the interaction is direct. Component of a multiprotein complex with NONO and SFPQ; associates with the complex via direct interaction with NONO. In terms of processing, phosphorylation at Ser-239, Tyr-253, Ser-480 and Ser-481 enhances actin polymerization activity.

The protein localises to the cytoplasm. Its subcellular location is the cytoskeleton. It is found in the nucleus. Functionally, regulates actin polymerization by stimulating the actin-nucleating activity of the Arp2/3 complex. Involved in various processes, such as mitosis and cytokinesis, via its role in the regulation of actin polymerization. Together with CDC42, involved in the extension and maintenance of the formation of thin, actin-rich surface projections called filopodia. In addition to its role in the cytoplasm, also plays a role in the nucleus by regulating gene transcription, probably by promoting nuclear actin polymerization. Binds to HSF1/HSTF1 and forms a complex on heat shock promoter elements (HSE) that negatively regulates HSP90 expression. Plays a role in dendrite spine morphogenesis. The protein is Actin nucleation-promoting factor WASL (Wasl) of Rattus norvegicus (Rat).